The chain runs to 746 residues: Iron-sulfur clusters transporter ABCB7, mitochondrial (746 aa).

The transit peptide at 1 to 19 directs the protein to the mitochondrion; the sequence is MAPMLVSLNCGIRVQRRTL. Over 20 to 133 the chain is Mitochondrial matrix; that stretch reads TLLIRQTSSY…KDRPDLRARV (114 aa). Residues 133 to 429 enclose the ABC transmembrane type-1 domain; it reads VAVSLGLLAG…LGTVYRETRQ (297 aa). A helical transmembrane segment spans residues 134 to 154; sequence AVSLGLLAGAKLTNVMVPFMF. Topologically, residues 155-176 are mitochondrial intermembrane; the sequence is KYAVDELNQMSGHMLNLNDAPS. Residues 177–199 form a helical membrane-spanning segment; it reads TVATMTTAVLIGYGVSRAGSALF. Topologically, residues 200–252 are mitochondrial matrix; sequence NELRNTVFGKVAQSSIRRIAKNVFLHLHNLDLGFHLSRQTGALSKAIDRGTRG. Residues 253–273 form a helical membrane-spanning segment; that stretch reads ISFVLSALVFNLGPTVFEMFL. The Mitochondrial intermembrane segment spans residues 274-283; that stretch reads VSAILYYKCG. Residues 284–304 traverse the membrane as a helical segment; it reads GEFAAVALGTLSAYTIFTILV. The Mitochondrial matrix portion of the chain corresponds to 305 to 375; the sequence is TQWRTRFRIE…TLAMLNFGQS (71 aa). Glutathione-binding positions include 308–312 and 371–374; these read RTRFR and NFGQ. The chain crosses the membrane as a helical span at residues 376 to 396; it reads AIFSVGLTAIMLLASKGIAAG. Topologically, residues 397–402 are mitochondrial intermembrane; that stretch reads NMTVGD. A helical membrane pass occupies residues 403-423; the sequence is LVMVNGLLFQLSLPLNFLGTV. Gly-421 contacts glutathione. Over 424–746 the chain is Mitochondrial matrix; that stretch reads YRETRQALID…SVKGCGNCSC (323 aa). The ABC transporter domain occupies 465–699; it reads IRFEDVYFEY…PGSLYAELWN (235 aa). Residues Tyr-474 and 498-505 each bind ATP; that span reads GGSGSGKS. The interval 708-728 is disordered; that stretch reads SRKSSSAPAAERLSQKEEERK.

It belongs to the ABC transporter superfamily. ABCB family. Heavy Metal importer (TC 3.A.1.210) subfamily. Homodimer.

The protein resides in the mitochondrion inner membrane. The protein localises to the mitochondrion. The catalysed reaction is (glutathione)4[2Fe(III)-2S] cluster(in) + ATP + H2O = (glutathione)4[2Fe(III)-2S] cluster(out) + ADP + phosphate + H(+). Exports glutathione-coordinated iron-sulfur clusters such as [2Fe-2S]-(GS)4 cluster from the mitochondria to the cytosol in an ATP-dependent manner allowing the assembly of the cytosolic iron-sulfur (Fe/S) cluster-containing proteins and participates in iron homeostasis. May play a role in iron and lipid metabolism. The polypeptide is Iron-sulfur clusters transporter ABCB7, mitochondrial (Oryzias latipes (Japanese rice fish)).